Reading from the N-terminus, the 372-residue chain is Glutamate 5-kinase (372 aa).

Lys-14 contacts ATP. Residues Ser-54, Asp-141, and Asn-153 each coordinate substrate. 173-174 lines the ATP pocket; the sequence is TD. The 79-residue stretch at 280 to 358 folds into the PUA domain; the sequence is RGHVVIDAGA…GEIETVLGYM (79 aa).

It belongs to the glutamate 5-kinase family.

The protein resides in the cytoplasm. The catalysed reaction is L-glutamate + ATP = L-glutamyl 5-phosphate + ADP. It functions in the pathway amino-acid biosynthesis; L-proline biosynthesis; L-glutamate 5-semialdehyde from L-glutamate: step 1/2. Its function is as follows. Catalyzes the transfer of a phosphate group to glutamate to form L-glutamate 5-phosphate. The polypeptide is Glutamate 5-kinase (Burkholderia orbicola (strain AU 1054)).